The following is a 273-amino-acid chain: Cytochrome b-c1 complex subunit Rieske, mitochondrial (273 aa).

Residues 1-61 (MLRVAGRRLS…PFFVASRGFS (61 aa)) constitute a mitochondrion transit peptide. The tract at residues 25 to 46 (PLAGAGVPDRDDDSARGRSQPR) is disordered. Topologically, residues 62-110 (STETVVPRNQDAGLADLPATVAAVKNPNPKVVYDEYNHERYPPGDPSKR) are mitochondrial matrix. A helical transmembrane segment spans residues 111-133 (AFAYFVLSGGRFIYASLLRLLVL). At 134–273 (KFVLSMSASK…FLEENKLLVG (140 aa)) the chain is on the mitochondrial intermembrane side. The 96-residue stretch at 176-271 (RRRTEDDIKL…YSFLEENKLL (96 aa)) folds into the Rieske domain. Residues cysteine 216, histidine 218, cysteine 235, and histidine 238 each coordinate [2Fe-2S] cluster. Cysteine 221 and cysteine 237 are oxidised to a cystine.

This sequence belongs to the Rieske iron-sulfur protein family. In terms of assembly, component of the ubiquinol-cytochrome c oxidoreductase (cytochrome b-c1 complex, complex III, CIII), a multisubunit enzyme composed of 3 respiratory subunits cytochrome b, cytochrome c1 and Rieske protein, 2 core protein subunits, and several low-molecular weight protein subunits. The complex exists as an obligatory dimer and forms supercomplexes (SCs) in the inner mitochondrial membrane with cytochrome c oxidase (complex IV, CIV). [2Fe-2S] cluster serves as cofactor.

It is found in the mitochondrion inner membrane. The catalysed reaction is a quinol + 2 Fe(III)-[cytochrome c](out) = a quinone + 2 Fe(II)-[cytochrome c](out) + 2 H(+)(out). Component of the ubiquinol-cytochrome c oxidoreductase, a multisubunit transmembrane complex that is part of the mitochondrial electron transport chain which drives oxidative phosphorylation. The respiratory chain contains 3 multisubunit complexes succinate dehydrogenase (complex II, CII), ubiquinol-cytochrome c oxidoreductase (cytochrome b-c1 complex, complex III, CIII) and cytochrome c oxidase (complex IV, CIV), that cooperate to transfer electrons derived from NADH and succinate to molecular oxygen, creating an electrochemical gradient over the inner membrane that drives transmembrane transport and the ATP synthase. The cytochrome b-c1 complex catalyzes electron transfer from ubiquinol to cytochrome c, linking this redox reaction to translocation of protons across the mitochondrial inner membrane, with protons being carried across the membrane as hydrogens on the quinol. In the process called Q cycle, 2 protons are consumed from the matrix, 4 protons are released into the intermembrane space and 2 electrons are passed to cytochrome c. The Rieske protein is a catalytic core subunit containing a [2Fe-2S] iron-sulfur cluster. It cycles between 2 conformational states during catalysis to transfer electrons from the quinol bound in the Q(0) site in cytochrome b to cytochrome c1. The polypeptide is Cytochrome b-c1 complex subunit Rieske, mitochondrial (Zea mays (Maize)).